We begin with the raw amino-acid sequence, 548 residues long: tRNA (guanine(26)-N(2))-dimethyltransferase (548 aa).

The Trm1 methyltransferase domain maps to 30–470 (ASLTEGSAII…APWSFVWDVL (441 aa)). Arg57, Arg137, Asp155, and Ala186 together coordinate S-adenosyl-L-methionine. Residues Cys317, Cys320, Cys354, and Cys357 each coordinate Zn(2+). Positions 523–548 (QMNPTENWGPKSKPGKRTIAEVDSKS) are disordered.

This sequence belongs to the class I-like SAM-binding methyltransferase superfamily. Trm1 family.

The protein localises to the mitochondrion. It localises to the nucleus. The protein resides in the cytoplasm. It carries out the reaction guanosine(26) in tRNA + 2 S-adenosyl-L-methionine = N(2)-dimethylguanosine(26) in tRNA + 2 S-adenosyl-L-homocysteine + 2 H(+). Dimethylates a single guanine residue at position 26 of nuclear- and mitochondrial-encoded tRNAs using S-adenosyl-L-methionine as donor of the methyl groups. Also has tRNA strand annealing and dissociation activity independently of its tRNA guanine-dimethyltransferase activity. In Schizosaccharomyces pombe (strain 972 / ATCC 24843) (Fission yeast), this protein is tRNA (guanine(26)-N(2))-dimethyltransferase.